Reading from the N-terminus, the 378-residue chain is MKILVDENMPYARELFSRLGEVQAVPGRPLPRELLVGADALMVRSVTKVNANLLFGSSVKFVGSATAGTDHVDDTWLNANGIAFSAAPGCNAIAVVEYVFSSLLMLAERDGFQLRDKTVGIVGVGNVGRRLDTRLKAWGVKTLLCDPPRADRGDAGDFLSLETLVRDADILTLHTPLYLDGPYRTHHLVDATVLNAFADGRILINACRGPVVDNAALLEALQQGKKLSVILDVWEPEPGLSTDLLARVDIGTAHIAGYTLEGKARGTTQVFEAWSEFIGTPQQIALSSLLPEPDYAEVTLTAPVDEALLKRLVHLVYDVRRDDALLRHAAHQEGEFDRLRKHYQERREWSSLHVICADVESADCLNALGFNASVRGAR.

Residues Ser-45 and Thr-66 each contribute to the substrate site. Asp-146 and Thr-175 together coordinate NAD(+). The active site involves Arg-208. Asp-232 provides a ligand contact to NAD(+). Glu-237 is an active-site residue. Catalysis depends on His-254, which acts as the Proton donor. Gly-257 lines the NAD(+) pocket. Tyr-258 serves as a coordination point for substrate.

It belongs to the D-isomer specific 2-hydroxyacid dehydrogenase family. PdxB subfamily. As to quaternary structure, homodimer.

Its subcellular location is the cytoplasm. It carries out the reaction 4-phospho-D-erythronate + NAD(+) = (R)-3-hydroxy-2-oxo-4-phosphooxybutanoate + NADH + H(+). The protein operates within cofactor biosynthesis; pyridoxine 5'-phosphate biosynthesis; pyridoxine 5'-phosphate from D-erythrose 4-phosphate: step 2/5. Functionally, catalyzes the oxidation of erythronate-4-phosphate to 3-hydroxy-2-oxo-4-phosphonooxybutanoate. The polypeptide is Erythronate-4-phosphate dehydrogenase (Pectobacterium atrosepticum (strain SCRI 1043 / ATCC BAA-672) (Erwinia carotovora subsp. atroseptica)).